We begin with the raw amino-acid sequence, 230 residues long: Cytidylate kinase (230 aa).

Residue 12 to 20 participates in ATP binding; the sequence is GPSGAGKGT.

The protein belongs to the cytidylate kinase family. Type 1 subfamily.

It is found in the cytoplasm. It catalyses the reaction CMP + ATP = CDP + ADP. It carries out the reaction dCMP + ATP = dCDP + ADP. The polypeptide is Cytidylate kinase (Shewanella sp. (strain MR-7)).